The chain runs to 130 residues: Large ribosomal subunit protein uL22 (130 aa).

It belongs to the universal ribosomal protein uL22 family. In terms of assembly, part of the 50S ribosomal subunit.

Functionally, this protein binds specifically to 23S rRNA; its binding is stimulated by other ribosomal proteins, e.g. L4, L17, and L20. It is important during the early stages of 50S assembly. It makes multiple contacts with different domains of the 23S rRNA in the assembled 50S subunit and ribosome. Its function is as follows. The globular domain of the protein is located near the polypeptide exit tunnel on the outside of the subunit, while an extended beta-hairpin is found that lines the wall of the exit tunnel in the center of the 70S ribosome. The polypeptide is Large ribosomal subunit protein uL22 (Clavibacter michiganensis subsp. michiganensis (strain NCPPB 382)).